A 180-amino-acid chain; its full sequence is Large ribosomal subunit protein uL5 (180 aa).

This sequence belongs to the universal ribosomal protein uL5 family. Part of the 50S ribosomal subunit; part of the 5S rRNA/L5/L18/L25 subcomplex. Contacts the 5S rRNA and the P site tRNA. Forms a bridge to the 30S subunit in the 70S ribosome.

In terms of biological role, this is one of the proteins that bind and probably mediate the attachment of the 5S RNA into the large ribosomal subunit, where it forms part of the central protuberance. In the 70S ribosome it contacts protein S13 of the 30S subunit (bridge B1b), connecting the 2 subunits; this bridge is implicated in subunit movement. Contacts the P site tRNA; the 5S rRNA and some of its associated proteins might help stabilize positioning of ribosome-bound tRNAs. The protein is Large ribosomal subunit protein uL5 of Mycoplasma capricolum subsp. capricolum (strain California kid / ATCC 27343 / NCTC 10154).